Consider the following 398-residue polypeptide: Peptidyl-prolyl cis-trans isomerase D (398 aa).

In terms of domain architecture, PPIase cyclophilin-type spans 21 to 185 (FGSSPASRPG…EDVKIVDCGE (165 aa)). TPR repeat units follow at residues 229 to 262 (GLAL…LQLH), 282 to 323 (TSIQ…PSTE), and 335 to 368 (AKAF…APED).

This sequence belongs to the cyclophilin-type PPIase family. PPIase D subfamily.

It is found in the cytoplasm. It carries out the reaction [protein]-peptidylproline (omega=180) = [protein]-peptidylproline (omega=0). In terms of biological role, PPIases accelerate the folding of proteins. It catalyzes the cis-trans isomerization of proline imidic peptide bonds in oligopeptides. The protein is Peptidyl-prolyl cis-trans isomerase D (CPR6) of Mycosarcoma maydis (Corn smut fungus).